The chain runs to 374 residues: Histidinol-phosphate aminotransferase (374 aa).

K211 carries the N6-(pyridoxal phosphate)lysine modification. Residues 351–368 (GNSSQDSASKSNSSANND) are compositionally biased toward low complexity. Positions 351–374 (GNSSQDSASKSNSSANNDELNASN) are disordered.

Belongs to the class-II pyridoxal-phosphate-dependent aminotransferase family. Histidinol-phosphate aminotransferase subfamily. As to quaternary structure, homodimer. Pyridoxal 5'-phosphate serves as cofactor.

The catalysed reaction is L-histidinol phosphate + 2-oxoglutarate = 3-(imidazol-4-yl)-2-oxopropyl phosphate + L-glutamate. Its pathway is amino-acid biosynthesis; L-histidine biosynthesis; L-histidine from 5-phospho-alpha-D-ribose 1-diphosphate: step 7/9. This chain is Histidinol-phosphate aminotransferase, found in Photobacterium profundum (strain SS9).